An 81-amino-acid chain; its full sequence is MNDAFSNAQHKLDALGLRCPEPVMMVRKTVRQMAAGETLLIIADDPATTRDIPSFCEFMDHTLIASETAQTPYQYLIKKGL.

Cys-19 serves as the catalytic Cysteine persulfide intermediate.

It belongs to the sulfur carrier protein TusA family.

It localises to the cytoplasm. Its function is as follows. Sulfur carrier protein which probably makes part of a sulfur-relay system. In Shewanella putrefaciens (strain CN-32 / ATCC BAA-453), this protein is Sulfur carrier protein TusA.